The chain runs to 72 residues: UPF0154 protein RBAM_017710 (72 aa).

A helical transmembrane segment spans residues 4-24 (WVGILVGVVALLIGVALGFFI).

It belongs to the UPF0154 family.

It localises to the cell membrane. In Bacillus velezensis (strain DSM 23117 / BGSC 10A6 / LMG 26770 / FZB42) (Bacillus amyloliquefaciens subsp. plantarum), this protein is UPF0154 protein RBAM_017710.